We begin with the raw amino-acid sequence, 118 residues long: Ig heavy chain V region AC38 205.12 (118 aa).

Positions 1 to 98 (EVQLQQSGPE…EDSAVYYCAR (98 aa)) are v segment. Residues cysteine 22 and cysteine 96 are joined by a disulfide bond. Positions 99–104 (GYGYDP) are d segment. The interval 105–118 (FDVWGTGTTVTVSS) is j segment.

This Mus musculus (Mouse) protein is Ig heavy chain V region AC38 205.12.